The primary structure comprises 591 residues: Probable sulfoacetaldehyde acetyltransferase (591 aa).

The interval 359-383 (MDHEDDDPGTEWNVGARQREPDRMS) is disordered.

Belongs to the TPP enzyme family. Mg(2+) serves as cofactor. Thiamine diphosphate is required as a cofactor.

The protein resides in the cytoplasm. It catalyses the reaction acetyl phosphate + sulfite + H(+) = sulfoacetaldehyde + phosphate. The protein operates within organosulfur degradation; taurine degradation via aerobic pathway; acetyl phosphate and sulfite from taurine: step 2/2. The polypeptide is Probable sulfoacetaldehyde acetyltransferase (xsc) (Rhizobium meliloti (strain 1021) (Ensifer meliloti)).